The chain runs to 163 residues: MADSSFDIVSKVDRQEVDNALNQAAKELATRFDFRGTDTKIAWKGDEAVELTSSTEERVKAAVDVFKEKLIRRDISLKAFEAGEPQASGKTYKVTGALKQGISSENAKKITKLIRDAGPKNVKTQIQGDEVRVTSKKRDDLQAVIAMLKKADLDVALQFVNYR.

This sequence belongs to the YajQ family.

Nucleotide-binding protein. The sequence is that of Nucleotide-binding protein MT0592 from Mycobacterium tuberculosis (strain CDC 1551 / Oshkosh).